The chain runs to 195 residues: Peroxiredoxin bcp1 (195 aa).

The region spanning 46–168 is the Thioredoxin domain; that stretch reads IQVGDVIPDI…SHWIFEKGTG (123 aa). Cys-89 functions as the Cysteine sulfenic acid (-SOH) intermediate in the catalytic mechanism. Cys-89 and Cys-94 form a disulfide bridge.

Belongs to the peroxiredoxin family. BCP/PrxQ subfamily. As to quaternary structure, monomer. The active site is a conserved redox-active cysteine residue, the peroxidatic cysteine (C(P)), which makes the nucleophilic attack on the peroxide substrate. The peroxide oxidizes the C(P)-SH to cysteine sulfenic acid (C(P)-SOH), which then reacts with another cysteine residue, the resolving cysteine (C(R)), to form a disulfide bridge. The disulfide is subsequently reduced by an appropriate electron donor to complete the catalytic cycle. In this atypical 2-Cys peroxiredoxin, C(R) is present in the same subunit to form an intramolecular disulfide. The disulfide is subsequently reduced by thioredoxin.

The protein resides in the cytoplasm. The protein localises to the nucleus. It catalyses the reaction a hydroperoxide + [thioredoxin]-dithiol = an alcohol + [thioredoxin]-disulfide + H2O. Its function is as follows. Thiol-specific peroxidase that catalyzes the reduction of hydrogen peroxide and organic hydroperoxides to water and alcohols, respectively. Plays a role in cell protection against oxidative stress by detoxifying peroxides and as sensor of hydrogen peroxide-mediated signaling events. Acts as a scavenger of H(2)O(2). This chain is Peroxiredoxin bcp1 (bcp1), found in Schizosaccharomyces pombe (strain 972 / ATCC 24843) (Fission yeast).